Reading from the N-terminus, the 384-residue chain is Galactokinase (384 aa).

Position 34-37 (34-37) interacts with substrate; sequence EHTD. 123–129 serves as a coordination point for ATP; sequence SSGLSSS. Residues serine 129 and glutamate 161 each contribute to the Mg(2+) site. Aspartate 173 serves as the catalytic Proton acceptor. A substrate-binding site is contributed by tyrosine 222.

This sequence belongs to the GHMP kinase family. GalK subfamily.

It is found in the cytoplasm. The catalysed reaction is alpha-D-galactose + ATP = alpha-D-galactose 1-phosphate + ADP + H(+). Its pathway is carbohydrate metabolism; galactose metabolism. Its function is as follows. Catalyzes the transfer of the gamma-phosphate of ATP to D-galactose to form alpha-D-galactose-1-phosphate (Gal-1-P). This is Galactokinase from Haemophilus influenzae (strain PittEE).